Reading from the N-terminus, the 252-residue chain is Small ribosomal subunit protein uS2 (252 aa).

S2 carries the post-translational modification N-acetylserine. The span at 213-222 (QVAEETAGAA) shows a compositional bias: low complexity. The disordered stretch occupies residues 213-252 (QVAEETAGAATEEEEAKEEVTEEQTEATEWAEETTEAVAW). Acidic residues predominate over residues 223-252 (TEEEEAKEEVTEEQTEATEWAEETTEAVAW).

The protein belongs to the universal ribosomal protein uS2 family. As to quaternary structure, component of the small ribosomal subunit. Mature ribosomes consist of a small (40S) and a large (60S) subunit. The 40S subunit contains about 33 different proteins and 1 molecule of RNA (18S). The 60S subunit contains about 49 different proteins and 3 molecules of RNA (25S, 5.8S and 5S). Interacts with RPS21.

The protein localises to the cytoplasm. Functionally, required for the assembly and/or stability of the 40S ribosomal subunit. Required for the processing of the 20S rRNA-precursor to mature 18S rRNA in a late step of the maturation of 40S ribosomal subunits. The chain is Small ribosomal subunit protein uS2 from Zygosaccharomyces rouxii (strain ATCC 2623 / CBS 732 / NBRC 1130 / NCYC 568 / NRRL Y-229).